Here is a 297-residue protein sequence, read N- to C-terminus: ATP phosphoribosyltransferase (297 aa).

N-acetylmethionine is present on M1.

It belongs to the ATP phosphoribosyltransferase family.

It localises to the cytoplasm. The enzyme catalyses 1-(5-phospho-beta-D-ribosyl)-ATP + diphosphate = 5-phospho-alpha-D-ribose 1-diphosphate + ATP. It participates in amino-acid biosynthesis; L-histidine biosynthesis; L-histidine from 5-phospho-alpha-D-ribose 1-diphosphate: step 1/9. Its function is as follows. Catalyzes the condensation of ATP and 5-phosphoribose 1-diphosphate to form N'-(5'-phosphoribosyl)-ATP (PR-ATP). Has a crucial role in the pathway because the rate of histidine biosynthesis seems to be controlled primarily by regulation of the enzymatic activity. This is ATP phosphoribosyltransferase (HIS1) from Saccharomyces cerevisiae (strain ATCC 204508 / S288c) (Baker's yeast).